The chain runs to 663 residues: DNA topoisomerase 4 subunit B (663 aa).

ATP contacts are provided by residues Y7, N47, D74, G114 to A120, and K341. A disordered region spans residues R386–A416. Residues E387–S398 are compositionally biased toward basic and acidic residues. The 115-residue stretch at N424–P538 folds into the Toprim domain. E430, D503, and D505 together coordinate Mg(2+).

It belongs to the type II topoisomerase family. ParE type 2 subfamily. Heterotetramer composed of ParC and ParE. Mg(2+) is required as a cofactor. Requires Mn(2+) as cofactor. The cofactor is Ca(2+).

The catalysed reaction is ATP-dependent breakage, passage and rejoining of double-stranded DNA.. Its function is as follows. Topoisomerase IV is essential for chromosome segregation. It relaxes supercoiled DNA. Performs the decatenation events required during the replication of a circular DNA molecule. In Staphylococcus aureus (strain NCTC 8325 / PS 47), this protein is DNA topoisomerase 4 subunit B.